A 385-amino-acid chain; its full sequence is DNA double-strand break repair protein Mre11 (385 aa).

Mn(2+) is bound by residues Asp-14, His-16, and Asp-58. Residue His-94 is the Proton donor of the active site. Positions 180, 216, and 218 each coordinate Mn(2+).

This sequence belongs to the MRE11/RAD32 family. In terms of assembly, homodimer. Forms a heterotetramer composed of two Mre11 subunits and two Rad50 subunits. Homodimerization facilitates DNA binding. Mn(2+) is required as a cofactor.

Nuclease activity is regulated by Rad50. The mirin-derivative PFM39, specifically inhibits the 3'-5' exonuclease activity. The N-alkylated mirin-derivatives PFM03 and PFM01 specifically inhibit the endonuclease activity. Its function is as follows. Part of the Rad50/Mre11 complex, which is involved in the early steps of DNA double-strand break (DSB) repair. The complex may facilitate opening of the processed DNA ends to aid in the recruitment of HerA and NurA. Mre11 binds to DSB ends and has both double-stranded 3'-5' exonuclease activity and single-stranded endonuclease activity. This chain is DNA double-strand break repair protein Mre11, found in Thermotoga maritima (strain ATCC 43589 / DSM 3109 / JCM 10099 / NBRC 100826 / MSB8).